The primary structure comprises 546 residues: Aladin (546 aa).

Cys-2 carries the N-acetylcysteine modification. A Phosphoserine modification is found at Ser-33. WD repeat units follow at residues 142–180 (EFAQ…VYNA), 183–222 (TIVP…IWTL), 234–274 (GCAQ…VWDV), 280–316 (VPLP…VWEA), 324–380 (WPTL…IVAD), 386–433 (IQTP…LFRT), and 442–482 (LPCG…IAHI). Ser-495, Ser-511, Ser-522, and Ser-525 each carry phosphoserine. A disordered region spans residues 500–546 (RAQEPPAGGGGSIHDLPLFTETSPTSAPWDPLPGPPPVLPHSPHSHL). Pro residues predominate over residues 529 to 539 (DPLPGPPPVLP). Ser-541 carries the post-translational modification Phosphoserine. Residues 544-546 (SHL) carry the Microbody targeting signal motif.

As to quaternary structure, interacts with NDC1, the interaction is required for nuclear pore localization. Interacts with the inactive form aurora kinase AURKA. Interacts with PGRMC2. Widely expressed. Particularly abundant in cerebellum, corpus callosum, adrenal gland, pituitary gland, gastrointestinal structures and fetal lung.

It is found in the nucleus. Its subcellular location is the nuclear pore complex. The protein resides in the cytoplasm. It localises to the cytoskeleton. The protein localises to the spindle pole. It is found in the nucleus envelope. Functionally, plays a role in the normal development of the peripheral and central nervous system. Required for the correct localization of aurora kinase AURKA and the microtubule minus end-binding protein NUMA1 as well as a subset of AURKA targets which ensures proper spindle formation and timely chromosome alignment. In Homo sapiens (Human), this protein is Aladin (AAAS).